The chain runs to 401 residues: MKEKIVLAYSGGLDTSVAVQWLIDKGYDVVACCLDVGEGKDLDIVYKKALDTGAIECHIIDATKEFSDEYVSYAIKGNLMYENAYPLFSALSRPLIAKKLVEIAEKTNSVGIAHGCTGKGNDQVRFEVAIKALNPSLKAFAPVREWAWSREEEIDYAIKHNIPVSINHDSPYSIDQNLWGRANECGILEDPYAAPPEDAFDLTNALEETPDTADEIILTFVKGIPVQIDGKTYELDDLILTLNALAGKHGIGRIDHVENRLVGIKSREIYEAPAAEVILKAHKALETITLTKDVAHFKPIIEKQFAEQLYNGLWFSPLTDSLKLFIDSTQQYVSGDVRIKLFKGNAIVNGRKSPYTLYDEKLATYTKEDAFNQDAAVGFIDIYGLPTQVNAMLNGGYSNEQ.

Position 8 to 16 (8 to 16) interacts with ATP; the sequence is AYSGGLDTS. L-citrulline is bound at residue Y85. G115 serves as a coordination point for ATP. Positions 117, 121, and 122 each coordinate L-aspartate. An L-citrulline-binding site is contributed by N121. L-citrulline-binding residues include R125, S173, E258, and Y270.

It belongs to the argininosuccinate synthase family. Type 1 subfamily. As to quaternary structure, homotetramer.

It is found in the cytoplasm. It carries out the reaction L-citrulline + L-aspartate + ATP = 2-(N(omega)-L-arginino)succinate + AMP + diphosphate + H(+). The protein operates within amino-acid biosynthesis; L-arginine biosynthesis; L-arginine from L-ornithine and carbamoyl phosphate: step 2/3. In Staphylococcus aureus (strain bovine RF122 / ET3-1), this protein is Argininosuccinate synthase.